Consider the following 293-residue polypeptide: Protein Pat (293 aa).

Residues 187 to 287 (LPDIILNPLD…LLLRTRQDRA (101 aa)) form the BEN domain.

As to quaternary structure, interacts with poc1b. As to expression, an mRNA and protein component of germ plasm and primordial germ cells (PGCs) throughout oogenesis and early development, being first localized to the granulo-fibrillar material (GFM) of the mitochondrial cloud in stage I and II oocytes and to the periphery of mature germinal granules both in oocytes and in embryos. Shows some somatic expression including the ectodermal cells of tailbud embryos. In adults, only expressed in ovaries.

It localises to the cytoplasm. The protein localises to the nucleus. Its function is as follows. Probably plays a role in germ plasm formation, positioning and maintenance. This Xenopus laevis (African clawed frog) protein is Protein Pat.